A 330-amino-acid polypeptide reads, in one-letter code: Aspartate--ammonia ligase (330 aa).

It belongs to the class-II aminoacyl-tRNA synthetase family. AsnA subfamily.

Its subcellular location is the cytoplasm. It catalyses the reaction L-aspartate + NH4(+) + ATP = L-asparagine + AMP + diphosphate + H(+). It participates in amino-acid biosynthesis; L-asparagine biosynthesis; L-asparagine from L-aspartate (ammonia route): step 1/1. The polypeptide is Aspartate--ammonia ligase (Streptococcus uberis (strain ATCC BAA-854 / 0140J)).